The following is a 248-amino-acid chain: 3-deoxy-manno-octulosonate cytidylyltransferase (248 aa).

Belongs to the KdsB family.

It is found in the cytoplasm. The catalysed reaction is 3-deoxy-alpha-D-manno-oct-2-ulosonate + CTP = CMP-3-deoxy-beta-D-manno-octulosonate + diphosphate. Its pathway is nucleotide-sugar biosynthesis; CMP-3-deoxy-D-manno-octulosonate biosynthesis; CMP-3-deoxy-D-manno-octulosonate from 3-deoxy-D-manno-octulosonate and CTP: step 1/1. It functions in the pathway bacterial outer membrane biogenesis; lipopolysaccharide biosynthesis. Activates KDO (a required 8-carbon sugar) for incorporation into bacterial lipopolysaccharide in Gram-negative bacteria. The polypeptide is 3-deoxy-manno-octulosonate cytidylyltransferase (Erwinia tasmaniensis (strain DSM 17950 / CFBP 7177 / CIP 109463 / NCPPB 4357 / Et1/99)).